A 165-amino-acid polypeptide reads, in one-letter code: Small ribosomal subunit protein eS10 (165 aa).

Phosphotyrosine is present on tyrosine 12. Residues 92-165 form a disordered region; it reads ATLRRSRPET…FGRGRGQPPQ (74 aa). The segment covering 97-128 has biased composition (basic and acidic residues); sequence SRPETGRPRPKGLEGERPARLTRGEADRDTYR. Residues lysine 138 and lysine 139 each participate in a glycyl lysine isopeptide (Lys-Gly) (interchain with G-Cter in ubiquitin) cross-link. Phosphoserine is present on serine 146. Residue arginine 153 is modified to Omega-N-methylarginine. The span at 154–165 shows a compositional bias: gly residues; the sequence is GGFGRGRGQPPQ. Arginine 158 and arginine 160 each carry symmetric dimethylarginine.

Belongs to the eukaryotic ribosomal protein eS10 family. In terms of assembly, component of the small ribosomal subunit. The methylated form interacts with NPM1. Post-translationally, methylated by PRMT5. Methylation is necessary for its interaction with NPS1, its localization in the granular component (GC) region of the nucleolus, for the proper assembly of ribosomes, protein synthesis and optimal cell proliferation. In terms of processing, monoubiquitinated by ZNF598 when a ribosome has stalled during translation of poly(A) sequences, leading to preclude synthesis of a long poly-lysine tail and initiate the ribosome quality control (RQC) pathway to degrade the potentially detrimental aberrant nascent polypeptide. Deubiquitinated by OTUD3 and USP21, antagonizing ZNF598 activity. Deubiquitinated by OTUD1, antagonizing ZNF598 activity and stimulating formation of polysomes: deubiquitination by OTUD1 promotes stability and translation of a subset mRNAs with a high abundance of rare codons can limit the translation rate. Deubiquitinated by USP10.

Its subcellular location is the cytoplasm. The protein localises to the nucleus. It is found in the nucleolus. Its function is as follows. Component of the 40S ribosomal subunit. The ribosome is a large ribonucleoprotein complex responsible for the synthesis of proteins in the cell. The chain is Small ribosomal subunit protein eS10 (RPS10) from Oryctolagus cuniculus (Rabbit).